A 554-amino-acid chain; its full sequence is Outer envelope protein 61 (554 aa).

Over 1-525 (MFNGLMDPEM…GMEKAKKAKK (525 aa)) the chain is Cytoplasmic. TPR repeat units follow at residues 103–136 (AQML…LKEI) and 180–213 (VKAL…SPED). Disordered stretches follow at residues 245–269 (TEEN…AQGV) and 395–439 (APAS…PSAP). Residues 254 to 263 (ENKKPSKEAN) show a composition bias toward basic and acidic residues. Residues 412–423 (SLGASGSSSGNS) are compositionally biased toward low complexity. Residues 526–546 (WLFGKGGLIFAILMLVLAMVL) form a helical membrane-spanning segment. The Lumenal segment spans residues 547 to 554 (HRLGYIGN).

Interacts (via TPR region) with HSP70-1, but not with HSP90-2. Interacts with ERDJ2A and ERDJ2B. In the ER membrane, associates with ERDJ2 in membrane complexes of 140 and 200 kDa and specifically interacts with the HSP70 and HSP90 chaperones via its TPR domain. In terms of tissue distribution, ubiquitous. Highest expression in leaves and lowest in roots.

It is found in the endoplasmic reticulum membrane. The protein resides in the plastid. It localises to the chloroplast outer membrane. Plays a role in protein import into the endoplasmic reticulum (ER). May function as chaperone docking protein during post-translational protein translocation into the ER. Chaperone receptor mediating Hsp70-dependent protein targeting to chloroplasts. Interacts specifically with some chloroplast precursors, but not with mitochondrial precursors. Able to select precursors for delivery to the chloroplast translocase independently of Hsp70. This is Outer envelope protein 61 (OEP61) from Arabidopsis thaliana (Mouse-ear cress).